The sequence spans 105 residues: Phosphoribosyl-AMP cyclohydrolase (105 aa).

Residue D72 participates in Mg(2+) binding. Position 73 (C73) interacts with Zn(2+). Mg(2+)-binding residues include D74 and D76. Zn(2+)-binding residues include C89 and C96.

Belongs to the PRA-CH family. Homodimer. Mg(2+) is required as a cofactor. The cofactor is Zn(2+).

It is found in the cytoplasm. It carries out the reaction 1-(5-phospho-beta-D-ribosyl)-5'-AMP + H2O = 1-(5-phospho-beta-D-ribosyl)-5-[(5-phospho-beta-D-ribosylamino)methylideneamino]imidazole-4-carboxamide. The protein operates within amino-acid biosynthesis; L-histidine biosynthesis; L-histidine from 5-phospho-alpha-D-ribose 1-diphosphate: step 3/9. In terms of biological role, catalyzes the hydrolysis of the adenine ring of phosphoribosyl-AMP. The chain is Phosphoribosyl-AMP cyclohydrolase from Listeria innocua serovar 6a (strain ATCC BAA-680 / CLIP 11262).